Here is a 453-residue protein sequence, read N- to C-terminus: MNIVILAAGTGKRMRSALPKVLHPLAGQPLLAHVIDTARTLKPTHLVVVVGHGAEAVRKAVAAPDVQFAVQEQQLGTGHAVQQALPLLDPSAPTLVLYGDVPLTRAGTLQALTERAGQGGYGVLTVTLADPSGYGRIVRDAQGKVARIVEQKDATPEQLEIAEINTGIIVAPTERLGRWLAALKNDNAQGEFYLTDAVEMAIEAGLEVVTTQPEDEWETLGVNSKQQLAELERIHQHNVADALLVAGVTLADPARLDVRGTLECGRDVSIDVNCVFEGRVTLADNVTIGPNCVIRDANIGAGTRVDAFTHIEGAEVGANAVLGPYARLRPGASLHDESHVGNFVEVKNAVLGRGSKANHLTYIGDSDIGARVNIGAGTITCNYDGANKFRTIIEDDVFVGSDTQLVAPVRVKRGATIAAGTTVWKDVEADALVLNDKTQTSKTGYVRPTKKKS.

The pyrophosphorylase stretch occupies residues 1–225 (MNIVILAAGT…EWETLGVNSK (225 aa)). UDP-N-acetyl-alpha-D-glucosamine contacts are provided by residues 6–9 (LAAG), K20, Q71, 76–77 (GT), 98–100 (YGD), G135, E150, N165, and N223. D100 contacts Mg(2+). N223 contacts Mg(2+). The linker stretch occupies residues 226-246 (QQLAELERIHQHNVADALLVA). Positions 247 to 453 (GVTLADPARL…GYVRPTKKKS (207 aa)) are N-acetyltransferase. Residues R329 and K347 each coordinate UDP-N-acetyl-alpha-D-glucosamine. H359 serves as the catalytic Proton acceptor. UDP-N-acetyl-alpha-D-glucosamine-binding residues include Y362 and N373. Residues A376, 382 to 383 (NY), S401, and A419 contribute to the acetyl-CoA site.

This sequence in the N-terminal section; belongs to the N-acetylglucosamine-1-phosphate uridyltransferase family. The protein in the C-terminal section; belongs to the transferase hexapeptide repeat family. Homotrimer. Mg(2+) serves as cofactor.

The protein localises to the cytoplasm. It carries out the reaction alpha-D-glucosamine 1-phosphate + acetyl-CoA = N-acetyl-alpha-D-glucosamine 1-phosphate + CoA + H(+). The enzyme catalyses N-acetyl-alpha-D-glucosamine 1-phosphate + UTP + H(+) = UDP-N-acetyl-alpha-D-glucosamine + diphosphate. It participates in nucleotide-sugar biosynthesis; UDP-N-acetyl-alpha-D-glucosamine biosynthesis; N-acetyl-alpha-D-glucosamine 1-phosphate from alpha-D-glucosamine 6-phosphate (route II): step 2/2. The protein operates within nucleotide-sugar biosynthesis; UDP-N-acetyl-alpha-D-glucosamine biosynthesis; UDP-N-acetyl-alpha-D-glucosamine from N-acetyl-alpha-D-glucosamine 1-phosphate: step 1/1. Its pathway is bacterial outer membrane biogenesis; LPS lipid A biosynthesis. Functionally, catalyzes the last two sequential reactions in the de novo biosynthetic pathway for UDP-N-acetylglucosamine (UDP-GlcNAc). The C-terminal domain catalyzes the transfer of acetyl group from acetyl coenzyme A to glucosamine-1-phosphate (GlcN-1-P) to produce N-acetylglucosamine-1-phosphate (GlcNAc-1-P), which is converted into UDP-GlcNAc by the transfer of uridine 5-monophosphate (from uridine 5-triphosphate), a reaction catalyzed by the N-terminal domain. The sequence is that of Bifunctional protein GlmU from Paraburkholderia phytofirmans (strain DSM 17436 / LMG 22146 / PsJN) (Burkholderia phytofirmans).